The primary structure comprises 218 residues: Thiopurine S-methyltransferase (218 aa).

Positions 10, 45, 66, and 123 each coordinate S-adenosyl-L-methionine.

Belongs to the class I-like SAM-binding methyltransferase superfamily. TPMT family.

The protein resides in the cytoplasm. It carries out the reaction S-adenosyl-L-methionine + a thiopurine = S-adenosyl-L-homocysteine + a thiopurine S-methylether.. In Shewanella baltica (strain OS155 / ATCC BAA-1091), this protein is Thiopurine S-methyltransferase.